A 218-amino-acid chain; its full sequence is MRIILLGAPGAGKGTQSHFISKALGIPQISTGDMLRAAVKEETPLGRKAKEVMDSGNLVSDDIILDIIKERLKEDDCRSGCLFDGFPRTIAQAEALDREGITINHVIEIRVEDSSIIQRMSGRRVHPASGRTYHLTFNPPQQQGVDDETGEPLIQRVDDTEETVKKRLAIYHEQTSPLIEYYTGRAAEGSLDSPRFTTVEGTGKVEEIRDRILKALGA.

ATP is bound at residue 10 to 15 (GAGKGT). An NMP region spans residues 30–59 (STGDMLRAAVKEETPLGRKAKEVMDSGNLV). AMP is bound by residues Thr-31, Arg-36, 57-59 (NLV), 85-88 (GFPR), and Gln-92. The interval 122–159 (GRRVHPASGRTYHLTFNPPQQQGVDDETGEPLIQRVDD) is LID. Residues Arg-123 and 132–133 (TY) contribute to the ATP site. Arg-156 and Arg-167 together coordinate AMP. Gly-203 lines the ATP pocket.

Belongs to the adenylate kinase family. Monomer.

Its subcellular location is the cytoplasm. It carries out the reaction AMP + ATP = 2 ADP. It functions in the pathway purine metabolism; AMP biosynthesis via salvage pathway; AMP from ADP: step 1/1. In terms of biological role, catalyzes the reversible transfer of the terminal phosphate group between ATP and AMP. Plays an important role in cellular energy homeostasis and in adenine nucleotide metabolism. This Chlorobium phaeovibrioides (strain DSM 265 / 1930) (Prosthecochloris vibrioformis (strain DSM 265)) protein is Adenylate kinase.